Reading from the N-terminus, the 518-residue chain is Light-independent protochlorophyllide reductase subunit B (518 aa).

Asp36 contacts [4Fe-4S] cluster. The active-site Proton donor is Asp299. Residue 434 to 435 (GM) coordinates substrate.

It belongs to the ChlB/BchB/BchZ family. In terms of assembly, protochlorophyllide reductase is composed of three subunits; ChlL, ChlN and ChlB. Forms a heterotetramer of two ChlB and two ChlN subunits. The cofactor is [4Fe-4S] cluster.

It is found in the plastid. It localises to the chloroplast. It catalyses the reaction chlorophyllide a + oxidized 2[4Fe-4S]-[ferredoxin] + 2 ADP + 2 phosphate = protochlorophyllide a + reduced 2[4Fe-4S]-[ferredoxin] + 2 ATP + 2 H2O. It participates in porphyrin-containing compound metabolism; chlorophyll biosynthesis (light-independent). In terms of biological role, component of the dark-operative protochlorophyllide reductase (DPOR) that uses Mg-ATP and reduced ferredoxin to reduce ring D of protochlorophyllide (Pchlide) to form chlorophyllide a (Chlide). This reaction is light-independent. The NB-protein (ChlN-ChlB) is the catalytic component of the complex. This chain is Light-independent protochlorophyllide reductase subunit B, found in Adiantum capillus-veneris (Maidenhair fern).